The sequence spans 149 residues: Large ribosomal subunit protein bL9 (149 aa).

It belongs to the bacterial ribosomal protein bL9 family.

Its function is as follows. Binds to the 23S rRNA. This is Large ribosomal subunit protein bL9 from Chromobacterium violaceum (strain ATCC 12472 / DSM 30191 / JCM 1249 / CCUG 213 / NBRC 12614 / NCIMB 9131 / NCTC 9757 / MK).